A 425-amino-acid polypeptide reads, in one-letter code: MYPSNKKKKVWREEKERLLKMTLEERRKEYLRDYIPLNSILSWKEEMKGKGQNDEENTQETSQVKKSLTEKVSLYRGDITLLEVDAIVNAANASLLGGGGVDGCIHRAAGPCLLAECRNLNGCDTGHAKITCGYDLPAKYVIHTVGPIARGHINGSHKEDLANCYKSSLKLVKENNIRSVAFPCISTGIYGFPNEPAAVIALNTIKEWLAKNHHEVDRIIFCVFLEVDFKIYKKKMNEFFSVDDNNEEEEDVEMKEDSDENGPEEKQSVEEMEEQSQDADGVNTVTVPGPASEEAVEDCKDEDFAKDENITKGGEVTDHSVRDQDHPDGQENDSTKNEIKIETESQSSYMETEELSSNQEDAVIVEQPEVIPLTEDQEEKEGEKAPGEDTPRMPGKSEGSSDLENTPGPDAGAQDEAKEQRNGTK.

Residues 59 to 240 enclose the Macro domain; the sequence is QETSQVKKSL…IYKKKMNEFF (182 aa). Substrate contacts are provided by residues 77–79, 90–92, and 97–102; these read GDI, AAN, and GGGGVD. A Glycyl lysine isopeptide (Lys-Gly) (interchain with G-Cter in ubiquitin) cross-link involves residue lysine 170. Substrate contacts are provided by residues 185-191 and phenylalanine 224; that span reads ISTGIYG. A disordered region spans residues 243 to 425; that stretch reads DDNNEEEEDV…EAKEQRNGTK (183 aa). Positions 244 to 262 are enriched in acidic residues; sequence DNNEEEEDVEMKEDSDENG. A compositionally biased stretch (basic and acidic residues) spans 302–343; the sequence is EDFAKDENITKGGEVTDHSVRDQDHPDGQENDSTKNEIKIET. A compositionally biased stretch (polar residues) spans 344–360; that stretch reads ESQSSYMETEELSSNQE. 2 stretches are compositionally biased toward basic and acidic residues: residues 381–391 and 415–425; these read EGEKAPGEDTP and DEAKEQRNGTK.

It belongs to the MacroD-type family. MacroD1/2-like subfamily. As to quaternary structure, interacts with ADP-ribosylated PARP1.

The protein localises to the nucleus. It carries out the reaction 2''-O-acetyl-ADP-D-ribose + H2O = ADP-D-ribose + acetate + H(+). The catalysed reaction is 4-O-(ADP-D-ribosyl)-L-aspartyl-[protein] + H2O = L-aspartyl-[protein] + ADP-D-ribose + H(+). The enzyme catalyses 5-O-(ADP-D-ribosyl)-L-glutamyl-[protein] + H2O = L-glutamyl-[protein] + ADP-D-ribose + H(+). It catalyses the reaction alpha-NAD(+) + H2O = ADP-D-ribose + nicotinamide + H(+). Its activity is regulated as follows. Subject to product inhibition by ADP-ribose. Removes ADP-ribose from aspartate and glutamate residues in proteins bearing a single ADP-ribose moiety. Inactive towards proteins bearing poly-ADP-ribose. Deacetylates O-acetyl-ADP ribose, a signaling molecule generated by the deacetylation of acetylated lysine residues in histones and other proteins. This Homo sapiens (Human) protein is ADP-ribose glycohydrolase MACROD2.